The chain runs to 310 residues: Protein CUP-SHAPED COTYLEDON 1 (310 aa).

The region spanning 20–172 (MPPGFRFHPT…EWVLCKVCLK (153 aa)) is the NAC domain. The DNA-binding element occupies 119-178 (LGMKKTLVFYKGRAPKGEKSCWVMHEYRLDGKFSYHYISSSAKDEWVLCKVCLKSGVVSR). Involved in transactivation activity regions lie at residues 179–210 (ETNL…NTFA) and 306–310 (WPFTL).

Expressed in inflorescence stems, rosette leaves, aerial parts of seedlings, flowers, floral buds and roots.

The protein localises to the nucleus. Functionally, transcription activator of STM and KNAT6. Involved in molecular mechanisms regulating shoot apical meristem (SAM) formation during embryogenesis and organ separation. Required for the fusion of septa of gynoecia along the length of the ovaries. Activates the shoot formation in callus in a STM-dependent manner. Seems to act as an inhibitor of cell division. The polypeptide is Protein CUP-SHAPED COTYLEDON 1 (NAC054) (Arabidopsis thaliana (Mouse-ear cress)).